The sequence spans 68 residues: U-scoloptoxin(02)-Er1a (68 aa).

The signal sequence occupies residues 1–20 (MIVSLRCCLLLVALLITVET). 3 disulfide bridges follow: Cys30–Cys52, Cys38–Cys58, and Cys42–Cys60.

The protein belongs to the invertebrate defensin family. In terms of tissue distribution, expressed by the venom gland.

It is found in the secreted. In terms of biological role, antibacterial peptide mostly active against Gram-positive bacteria. The sequence is that of U-scoloptoxin(02)-Er1a from Ethmostigmus rubripes (Giant centipede).